Reading from the N-terminus, the 123-residue chain is Large ribosomal subunit protein bL12 (123 aa).

The protein belongs to the bacterial ribosomal protein bL12 family. As to quaternary structure, homodimer. Part of the ribosomal stalk of the 50S ribosomal subunit. Forms a multimeric L10(L12)X complex, where L10 forms an elongated spine to which 2 to 4 L12 dimers bind in a sequential fashion. Binds GTP-bound translation factors.

Functionally, forms part of the ribosomal stalk which helps the ribosome interact with GTP-bound translation factors. Is thus essential for accurate translation. This is Large ribosomal subunit protein bL12 from Neisseria meningitidis serogroup C (strain 053442).